A 120-amino-acid chain; its full sequence is UPF0145 protein Bcenmc03_5217 (120 aa).

This sequence belongs to the UPF0145 family.

The polypeptide is UPF0145 protein Bcenmc03_5217 (Burkholderia orbicola (strain MC0-3)).